Reading from the N-terminus, the 129-residue chain is Large ribosomal subunit protein mL53 (129 aa).

A mitochondrion-targeting transit peptide spans 1–50 (MREKLNLLAKLKSVVYKFDPLNPNTRSIRSFIPLTTCKRSRQLAPECSIS).

The protein belongs to the mitochondrion-specific ribosomal protein mL53 family.

The protein resides in the mitochondrion. This chain is Large ribosomal subunit protein mL53 (mrpl53), found in Dictyostelium discoideum (Social amoeba).